Reading from the N-terminus, the 74-residue chain is Conotoxin AbVII (74 aa).

The first 17 residues, 1 to 17 (VLIIAVLFLTACQLTTA), serve as a signal peptide directing secretion. Positions 18–40 (ETSSRGKQKHRALRSTDKNSRMT) are excised as a propeptide. A disordered region spans residues 19–41 (TSSRGKQKHRALRSTDKNSRMTK). Intrachain disulfides connect C43/C57, C50/C61, and C56/C68.

The protein belongs to the conotoxin O1 superfamily. As to expression, expressed by the venom duct.

The protein resides in the secreted. This Conus abbreviatus (Abbreviated cone) protein is Conotoxin AbVII.